The chain runs to 325 residues: Helicase VP6-A (325 aa).

2 disordered regions span residues 1–127 (MLLA…NGRR) and 174–230 (EGVA…EPAR). Basic and acidic residues-rich tracts occupy residues 8-18 (VIKRSSEELKQ), 32-54 (EGGKENKTEPKEESKAEGSKDGE), 61-79 (GQKEEGGKETKDADVDRRI), and 92-105 (PGERANENADRGDG). Residue K106 participates in ATP binding. Positions 106–122 (KVGGGGGDADAGVGATG) are enriched in gly residues. A compositionally biased stretch (basic and acidic residues) spans 175 to 229 (GVAEQTERSRDLRRKEKNGTHAKAVERGGRKQRKESHGDAQREGVEEEKTSEEPA).

The protein belongs to the orbivirus VP6 family. As to quaternary structure, homohexamer.

The protein localises to the virion. The enzyme catalyses ATP + H2O = ADP + phosphate + H(+). Functionally, ATP dependent RNA helicase essential for RNA packaging and viral transcription. Possesses ss- and dsRNA-binding capacity. The sequence is that of Helicase VP6-A (Segment-9) from Bluetongue virus 13 (isolate USA) (BTV 13).